Consider the following 55-residue polypeptide: Male-specific sperm protein Mst84Dc (55 aa).

Belongs to the MST(3)CGP family. In terms of tissue distribution, testis.

This chain is Male-specific sperm protein Mst84Dc (Mst84Dc), found in Drosophila melanogaster (Fruit fly).